A 270-amino-acid polypeptide reads, in one-letter code: Structure-specific endonuclease subunit SLX1 (270 aa).

Positions 9-94 (RFFGVYLLYC…PQASRRLTHV (86 aa)) constitute a GIY-YIG domain. The SLX1-type zinc-finger motif lies at 182-234 (CSLCARLLQDEEGPLCCPHPGCPLRAHIICLAEEFLQEEPGQLLPLEGHCPSC).

It belongs to the SLX1 family. Forms a heterodimer with SLX4. The cofactor is a divalent metal cation. Expressed in testis, colon, bone marrow, brain, thymus and to a lesser extent in heart, kidney, skeletal muscle and spleen.

It is found in the nucleus. Its function is as follows. Catalytic subunit of the SLX1-SLX4 structure-specific endonuclease that resolves DNA secondary structures generated during DNA repair and recombination. Has endonuclease activity towards branched DNA substrates, introducing single-strand cuts in duplex DNA close to junctions with ss-DNA. Has a preference for 5'-flap structures, and promotes symmetrical cleavage of static and migrating Holliday junctions (HJs). Resolves HJs by generating two pairs of ligatable, nicked duplex products. This Mus musculus (Mouse) protein is Structure-specific endonuclease subunit SLX1 (Slx1b).